The chain runs to 235 residues: Hydroxyacylglutathione hydrolase (235 aa).

Zn(2+)-binding residues include His53, His55, Asp57, His58, His109, Asp127, and His165.

This sequence belongs to the metallo-beta-lactamase superfamily. Glyoxalase II family. Monomer. Zn(2+) serves as cofactor.

It catalyses the reaction an S-(2-hydroxyacyl)glutathione + H2O = a 2-hydroxy carboxylate + glutathione + H(+). It functions in the pathway secondary metabolite metabolism; methylglyoxal degradation; (R)-lactate from methylglyoxal: step 2/2. In terms of biological role, thiolesterase that catalyzes the hydrolysis of S-D-lactoyl-glutathione to form glutathione and D-lactic acid. This is Hydroxyacylglutathione hydrolase from Actinobacillus pleuropneumoniae serotype 7 (strain AP76).